Consider the following 75-residue polypeptide: Small ribosomal subunit protein bS16 (75 aa).

Belongs to the bacterial ribosomal protein bS16 family.

The polypeptide is Small ribosomal subunit protein bS16 (Campylobacter fetus subsp. fetus (strain 82-40)).